Consider the following 201-residue polypeptide: uncharacterized protein (201 aa).

The signal sequence occupies residues 1–25 (MYRAGVTLLVVAVVSLGRWDVVTMA). The Extracellular portion of the chain corresponds to 26 to 170 (AAIGIGWYEP…AYFRRSNHRA (145 aa)). Residues asparagine 46, asparagine 49, asparagine 55, asparagine 84, asparagine 95, asparagine 113, asparagine 122, asparagine 137, and asparagine 144 are each glycosylated (N-linked (GlcNAc...) asparagine; by host). A helical transmembrane segment spans residues 171–191 (FMIVILTQVVFVVFIINASFI). The Cytoplasmic segment spans residues 192–201 (WSWTFRRHKR).

It belongs to the HHV-5 UL120 protein family.

It is found in the host membrane. This is an uncharacterized protein from Homo sapiens (Human).